Here is a 257-residue protein sequence, read N- to C-terminus: Zinc transporter ZupT (257 aa).

The next 8 membrane-spanning stretches (helical) occupy residues 5 to 25 (LILTLLAGAATFIGAFLGVLG), 32 to 52 (VLAFSLGFAAGIMLLISLMEM), 61 to 81 (GMSPVLGYGMFIIGLLGYFGL), 109 to 129 (AILLTLGISLHNFPEGIATFV), 137 to 157 (LGFGIALAVALHNIPEGLAVA), 171 to 191 (IFWAGISGMAEILGGVLAWLI), 195 to 215 (LVSPIVMAAIMAAVAGIMVAL), and 236 to 256 (GVLCGMSIMGLSLVILQTIGI). Residues asparagine 120 and glutamate 123 each contribute to the Fe(2+) site. The Zn(2+) site is built by glutamate 123 and histidine 148. Residues asparagine 149, glutamate 152, and glutamate 181 each coordinate Fe(2+). Residue glutamate 152 participates in Zn(2+) binding.

It belongs to the ZIP transporter (TC 2.A.5) family. ZupT subfamily.

The protein localises to the cell inner membrane. The catalysed reaction is Zn(2+)(in) = Zn(2+)(out). Mediates zinc uptake. May also transport other divalent cations. This chain is Zinc transporter ZupT, found in Salmonella agona (strain SL483).